A 389-amino-acid chain; its full sequence is Formate-dependent phosphoribosylglycinamide formyltransferase (389 aa).

N(1)-(5-phospho-beta-D-ribosyl)glycinamide contacts are provided by residues 12-13 (EL) and Glu72. ATP contacts are provided by residues Arg104, Lys145, 150–155 (SSGKGQ), 185–188 (EEFI), and Glu193. Residues 109-301 (DLAAKELGLK…EFELHLRAVL (193 aa)) form the ATP-grasp domain. Glu258 and Glu271 together coordinate Mg(2+). Residues Asp278, Lys350, and 357-358 (RR) contribute to the N(1)-(5-phospho-beta-D-ribosyl)glycinamide site.

It belongs to the PurK/PurT family. Homodimer.

The catalysed reaction is N(1)-(5-phospho-beta-D-ribosyl)glycinamide + formate + ATP = N(2)-formyl-N(1)-(5-phospho-beta-D-ribosyl)glycinamide + ADP + phosphate + H(+). It functions in the pathway purine metabolism; IMP biosynthesis via de novo pathway; N(2)-formyl-N(1)-(5-phospho-D-ribosyl)glycinamide from N(1)-(5-phospho-D-ribosyl)glycinamide (formate route): step 1/1. Involved in the de novo purine biosynthesis. Catalyzes the transfer of formate to 5-phospho-ribosyl-glycinamide (GAR), producing 5-phospho-ribosyl-N-formylglycinamide (FGAR). Formate is provided by PurU via hydrolysis of 10-formyl-tetrahydrofolate. The sequence is that of Formate-dependent phosphoribosylglycinamide formyltransferase from Phocaeicola vulgatus (strain ATCC 8482 / DSM 1447 / JCM 5826 / CCUG 4940 / NBRC 14291 / NCTC 11154) (Bacteroides vulgatus).